The chain runs to 391 residues: Isochorismate synthase EntC (391 aa).

The Mg(2+) site is built by Thr140, Thr142, Val145, and Asp146. The Proton acceptor role is filled by Lys147. Residue Glu197 is the Proton donor of the active site. Residues Gly214, Ser215, Glu241, Ala303, Arg347, and Gly361 each contribute to the isochorismate site. Glu241 lines the Mg(2+) pocket. Glu376 is a Mg(2+) binding site. Isochorismate is bound at residue Lys380.

It belongs to the isochorismate synthase family. As to quaternary structure, monomer. Forms a specific pairwise interaction with EntB; this interaction likely facilitates substrate channeling to connect the EntB and EntC active sites. The cofactor is Mg(2+).

It catalyses the reaction chorismate = isochorismate. It participates in siderophore biosynthesis; enterobactin biosynthesis. In terms of biological role, involved in the biosynthesis of the siderophore enterobactin (macrocyclic trimeric lactone of N-(2,3-dihydroxybenzoyl)-serine). Catalyzes the reversible conversion of chorismate to isochorismate. This is Isochorismate synthase EntC from Escherichia coli O157:H7.